A 70-amino-acid chain; its full sequence is Sec-independent protein translocase protein TatA (70 aa).

A helical transmembrane segment spans residues methionine 1–glycine 21. The interval aspartate 46 to serine 70 is disordered.

This sequence belongs to the TatA/E family. The Tat system comprises two distinct complexes: a TatABC complex, containing multiple copies of TatA, TatB and TatC subunits, and a separate TatA complex, containing only TatA subunits. Substrates initially bind to the TatABC complex, which probably triggers association of the separate TatA complex to form the active translocon.

It is found in the cell inner membrane. Functionally, part of the twin-arginine translocation (Tat) system that transports large folded proteins containing a characteristic twin-arginine motif in their signal peptide across membranes. TatA could form the protein-conducting channel of the Tat system. The protein is Sec-independent protein translocase protein TatA of Thiobacillus denitrificans (strain ATCC 25259 / T1).